The sequence spans 127 residues: Glycine cleavage system H protein (127 aa).

The Lipoyl-binding domain occupies E22–K104. K63 carries the N6-lipoyllysine modification.

Belongs to the GcvH family. In terms of assembly, the glycine cleavage system is composed of four proteins: P, T, L and H. Requires (R)-lipoate as cofactor.

The glycine cleavage system catalyzes the degradation of glycine. The H protein shuttles the methylamine group of glycine from the P protein to the T protein. The chain is Glycine cleavage system H protein from Nitratidesulfovibrio vulgaris (strain DSM 19637 / Miyazaki F) (Desulfovibrio vulgaris).